A 454-amino-acid chain; its full sequence is MSHNDTIVAQATPPGRGGVGILRISGLKARDVAQAVLGKLPKPRYADYLPFNDVDGTPLDQGIALWFPGPNSFTGEDVLELQGHGGPVILDLLLKRILTLPGLRIARPGEFSERAFLNDKLDLAQAEAIADLIDASSEQAARSALNSLQGAFSARVNHLVEALTHLRIYVEAAIDFPDEEIDFLSDGKIEAQLNEVMADLDAVRAEARQGSLLREGMKVVIAGRPNAGKSSLLNALAGREAAIVTDIAGTTRDVLREHIHIDGMPLHIIDTAGLRDANDEVERIGIERAWQEIAQADRVLFMVDGTTTSAVDPAEIWPDFIERLPAKLPITVVRNKADVTGEALGISEVNGHSLIRLSARTGDGVEVLRNHLKQSMGFDTNMEGGFLARRRHLQALEEAANHLQQGKAQLLGAWAGELLAEELRLAQQALSEITGEFTSDDLLGRIFSSFCIGK.

(6S)-5-formyl-5,6,7,8-tetrahydrofolate contacts are provided by Arg23, Glu80, and Lys120. Residues 216-377 (GMKVVIAGRP…LRNHLKQSMG (162 aa)) enclose the TrmE-type G domain. Asn226 serves as a coordination point for K(+). GTP-binding positions include 226–231 (NAGKSS), 245–251 (TDIAGTT), 270–273 (DTAG), 335–338 (NKAD), and 358–360 (SAR). Mg(2+) is bound at residue Ser230. Positions 245, 247, and 250 each coordinate K(+). Thr251 contacts Mg(2+). Lys454 contributes to the (6S)-5-formyl-5,6,7,8-tetrahydrofolate binding site.

This sequence belongs to the TRAFAC class TrmE-Era-EngA-EngB-Septin-like GTPase superfamily. TrmE GTPase family. Homodimer. Heterotetramer of two MnmE and two MnmG subunits. K(+) is required as a cofactor.

It is found in the cytoplasm. Functionally, exhibits a very high intrinsic GTPase hydrolysis rate. Involved in the addition of a carboxymethylaminomethyl (cmnm) group at the wobble position (U34) of certain tRNAs, forming tRNA-cmnm(5)s(2)U34. This is tRNA modification GTPase MnmE from Klebsiella pneumoniae subsp. pneumoniae (strain ATCC 700721 / MGH 78578).